A 193-amino-acid chain; its full sequence is 3-isopropylmalate dehydratase small subunit (193 aa).

Belongs to the LeuD family. LeuD type 1 subfamily. Heterodimer of LeuC and LeuD.

The enzyme catalyses (2R,3S)-3-isopropylmalate = (2S)-2-isopropylmalate. The protein operates within amino-acid biosynthesis; L-leucine biosynthesis; L-leucine from 3-methyl-2-oxobutanoate: step 2/4. Catalyzes the isomerization between 2-isopropylmalate and 3-isopropylmalate, via the formation of 2-isopropylmaleate. The polypeptide is 3-isopropylmalate dehydratase small subunit (Bacillus cereus (strain B4264)).